Consider the following 185-residue polypeptide: Large ribosomal subunit protein bL25 (185 aa).

The protein belongs to the bacterial ribosomal protein bL25 family. CTC subfamily. Part of the 50S ribosomal subunit; part of the 5S rRNA/L5/L18/L25 subcomplex. Contacts the 5S rRNA. Binds to the 5S rRNA independently of L5 and L18.

In terms of biological role, this is one of the proteins that binds to the 5S RNA in the ribosome where it forms part of the central protuberance. The sequence is that of Large ribosomal subunit protein bL25 from Laribacter hongkongensis (strain HLHK9).